We begin with the raw amino-acid sequence, 344 residues long: 2,3,4,5-tetrahydropyridine-2,6-dicarboxylate N-succinyltransferase (344 aa).

Glu205 provides a ligand contact to Mg(2+). The active-site Acyl-anhydride intermediate is the Glu221. Succinyl-CoA contacts are provided by residues Arg223, Gly238, Ser241, Ala264, 279–280, Gly287, Lys304, and 317–320; these read EA and RRNS.

It belongs to the type 2 tetrahydrodipicolinate N-succinyltransferase family. As to quaternary structure, homotrimer.

Its subcellular location is the cytoplasm. The enzyme catalyses (S)-2,3,4,5-tetrahydrodipicolinate + succinyl-CoA + H2O = (S)-2-succinylamino-6-oxoheptanedioate + CoA. It functions in the pathway amino-acid biosynthesis; L-lysine biosynthesis via DAP pathway; LL-2,6-diaminopimelate from (S)-tetrahydrodipicolinate (succinylase route): step 1/3. In terms of biological role, catalyzes the conversion of the cyclic tetrahydrodipicolinate (THDP) into the acyclic N-succinyl-L-2-amino-6-oxopimelate using succinyl-CoA. The chain is 2,3,4,5-tetrahydropyridine-2,6-dicarboxylate N-succinyltransferase from Pseudomonas paraeruginosa (strain DSM 24068 / PA7) (Pseudomonas aeruginosa (strain PA7)).